The primary structure comprises 287 residues: MAGAKEIRSKIASVQNTQKITKAMEMVAASKMRKSQDRMAASRPYAETMRKVIGHLANGNLEYKHPYLEERDVKRVGYLVVSTDRGLCGGLNINLFKKLLADMKAWSDKGVQCELAMIGSKGVSFFNSVGGNVVAQVTGMGDNPSLSELIGPVKVMLQAYDEGRLDKLYIVSNKFINTMSQVPTITQLLPLPASEDDDLKRTAWDYLYEPDPKALLDTLLRRYVESQVYQGVVENLASEQAARMVAMKAATDNGGSLIKELQLVYNKARQASITQELTEIVSGAAAV.

It belongs to the ATPase gamma chain family. F-type ATPases have 2 components, CF(1) - the catalytic core - and CF(0) - the membrane proton channel. CF(1) has five subunits: alpha(3), beta(3), gamma(1), delta(1), epsilon(1). CF(0) has three main subunits: a, b and c.

The protein resides in the cell inner membrane. In terms of biological role, produces ATP from ADP in the presence of a proton gradient across the membrane. The gamma chain is believed to be important in regulating ATPase activity and the flow of protons through the CF(0) complex. This Salmonella paratyphi A (strain ATCC 9150 / SARB42) protein is ATP synthase gamma chain.